The following is a 394-amino-acid chain: Elongation factor Tu (394 aa).

The 195-residue stretch at 10–204 folds into the tr-type G domain; sequence KPHVNIGTIG…AVDSYIPQPV (195 aa). Residues 19 to 26 form a G1 region; it reads GHVDHGKT. Residue 19–26 participates in GTP binding; sequence GHVDHGKT. Threonine 26 lines the Mg(2+) pocket. The interval 60–64 is G2; it reads GITIS. Residues 81–84 are G3; it reads DCPG. Residues 81 to 85 and 136 to 139 contribute to the GTP site; these read DCPGH and NKVD. Residues 136–139 are G4; the sequence is NKVD. A G5 region spans residues 174–176; it reads SAL.

It belongs to the TRAFAC class translation factor GTPase superfamily. Classic translation factor GTPase family. EF-Tu/EF-1A subfamily. In terms of assembly, monomer.

It localises to the cytoplasm. It catalyses the reaction GTP + H2O = GDP + phosphate + H(+). Functionally, GTP hydrolase that promotes the GTP-dependent binding of aminoacyl-tRNA to the A-site of ribosomes during protein biosynthesis. The sequence is that of Elongation factor Tu from Rickettsia parkeri.